The following is a 396-amino-acid chain: DNA-directed RNA polymerase subunit 6 (396 aa).

Disordered regions lie at residues 1–137 (MSSK…DIED) and 290–396 (NQQK…DYSE). 3 stretches are compositionally biased toward acidic residues: residues 21–53 (EYYD…DDEN), 76–88 (IDPD…DTDG), and 97–137 (EMGE…DIED). Polar residues predominate over residues 290 to 312 (NQQKNSTTDTETLSTQENASTRV). Low complexity-rich tracts occupy residues 313 to 338 (SGSN…SKSN) and 346 to 366 (NSRT…SRTG). Residues 367-380 (SKSKKSSNTKSKSK) show a composition bias toward basic residues. Positions 385 to 396 (NSDDSDYSDYSE) are enriched in acidic residues.

Belongs to the archaeal Rpo6/eukaryotic RPB6 RNA polymerase subunit family.

The enzyme catalyses RNA(n) + a ribonucleoside 5'-triphosphate = RNA(n+1) + diphosphate. In terms of biological role, DNA-dependent RNA polymerase catalyzes the transcription of DNA into RNA using the four ribonucleoside triphosphates as substrates. The protein is DNA-directed RNA polymerase subunit 6 of Acanthamoeba polyphaga (Amoeba).